Reading from the N-terminus, the 146-residue chain is Ribosome maturation factor RimP (146 aa).

The protein belongs to the RimP family.

The protein localises to the cytoplasm. In terms of biological role, required for maturation of 30S ribosomal subunits. The polypeptide is Ribosome maturation factor RimP (Helicobacter pylori (strain J99 / ATCC 700824) (Campylobacter pylori J99)).